Here is a 178-residue protein sequence, read N- to C-terminus: MSSAKPINVYSIPELNQALDEALPSVFARLNYERSYALLDAKLYIGYSIAVVAGLSFFLDKKFERDQIVTYQKLLVGAYFVLSLLFWYFSRFIEKGTVYVGKRRGTKEEIYVKTKFEKNEPLYLVELVQKKKGENSKKELKAKLEVNKVFNESGYLQNDAYFKWFSEQHNVLDTKKNE.

Residues 1 to 37 (MSSAKPINVYSIPELNQALDEALPSVFARLNYERSYA) lie on the Cytoplasmic side of the membrane. Residues 38 to 58 (LLDAKLYIGYSIAVVAGLSFF) form a helical membrane-spanning segment. The Lumenal segment spans residues 59–67 (LDKKFERDQ). The chain crosses the membrane as a helical span at residues 68-88 (IVTYQKLLVGAYFVLSLLFWY). Over 89–178 (FSRFIEKGTV…HNVLDTKKNE (90 aa)) the chain is Cytoplasmic.

It belongs to the SPCS2 family. As to quaternary structure, component of the signal peptidase complex (SPC) composed of a catalytic subunit SEC11 and three accessory subunits SPC1, SPC2 and SPC3. The complex induces a local thinning of the ER membrane which is used to measure the length of the signal peptide (SP) h-region of protein substrates. This ensures the selectivity of the complex towards h-regions shorter than 18-20 amino acids. SPC associates with the translocon complex. Interacts with SBH1 and SEB2/SBH2.

Its subcellular location is the endoplasmic reticulum membrane. Functionally, component of the signal peptidase complex (SPC) which catalyzes the cleavage of N-terminal signal sequences from nascent proteins as they are translocated into the lumen of the endoplasmic reticulum. Enhances the enzymatic activity of SPC and facilitates the interactions between different components of the translocation site. The chain is Signal peptidase complex subunit 2 (SPC2) from Saccharomyces cerevisiae (strain ATCC 204508 / S288c) (Baker's yeast).